Consider the following 56-residue polypeptide: Protein hunchback (56 aa).

3 C2H2-type zinc fingers span residues 1-5 (HVRNH), 11-33 (HKCG…MKSH), and 39-56 (YRCA…SLKL).

This sequence belongs to the hunchback C2H2-type zinc-finger protein family.

The protein resides in the nucleus. In terms of biological role, gap class segmentation protein that controls development of head structures. The polypeptide is Protein hunchback (hb) (Bithynia tentaculata (Spire snail)).